A 481-amino-acid polypeptide reads, in one-letter code: ATP synthase subunit beta, chloroplastic (481 aa).

Position 161 to 168 (glycine 161 to threonine 168) interacts with ATP.

The protein belongs to the ATPase alpha/beta chains family. As to quaternary structure, F-type ATPases have 2 components, CF(1) - the catalytic core - and CF(0) - the membrane proton channel. CF(1) has five subunits: alpha(3), beta(3), gamma(1), delta(1), epsilon(1). CF(0) has four main subunits: a(1), b(1), b'(1) and c(9-12).

The protein resides in the plastid. Its subcellular location is the chloroplast thylakoid membrane. The enzyme catalyses ATP + H2O + 4 H(+)(in) = ADP + phosphate + 5 H(+)(out). In terms of biological role, produces ATP from ADP in the presence of a proton gradient across the membrane. The catalytic sites are hosted primarily by the beta subunits. The sequence is that of ATP synthase subunit beta, chloroplastic from Pylaiella littoralis (Seaweed).